Consider the following 70-residue polypeptide: Peptide BmKn2 (70 aa).

The first 23 residues, 1 to 23, serve as a signal peptide directing secretion; that stretch reads MKSQTFFLLFLVVLLLAISQSEA. The residue at position 36 (phenylalanine 36) is a Phenylalanine amide. A propeptide spanning residues 40–70 is cleaved from the precursor; sequence SMRDMDTMKYLYDPSLSAADLKTLQKLMENY.

The protein belongs to the non-disulfide-bridged peptide (NDBP) superfamily. Short antimicrobial peptide (group 4) family. Expressed by the venom gland.

It is found in the secreted. It localises to the target cell membrane. Antimicrobial peptide with potent activity against bacteria. Has strong antibacterial activity against Gram-positive bacteria S.aureus, M.luteus, B.subtilis, and Gram-negative bacteria E.coli, P.aeruginosa and N.gonorrhoeae. Also shows low activity against HIV-1 PV. This chain is Peptide BmKn2, found in Olivierus martensii (Manchurian scorpion).